Reading from the N-terminus, the 346-residue chain is Elongation factor Ts (346 aa).

Positions 80–83 (TDFV) are involved in Mg(2+) ion dislocation from EF-Tu.

It belongs to the EF-Ts family.

The protein resides in the cytoplasm. Its function is as follows. Associates with the EF-Tu.GDP complex and induces the exchange of GDP to GTP. It remains bound to the aminoacyl-tRNA.EF-Tu.GTP complex up to the GTP hydrolysis stage on the ribosome. This is Elongation factor Ts from Streptococcus pyogenes serotype M1.